The primary structure comprises 460 residues: 3-isopropylmalate dehydratase large subunit (460 aa).

3 residues coordinate [4Fe-4S] cluster: Cys338, Cys398, and Cys401.

Belongs to the aconitase/IPM isomerase family. LeuC type 1 subfamily. Heterodimer of LeuC and LeuD. The cofactor is [4Fe-4S] cluster.

It catalyses the reaction (2R,3S)-3-isopropylmalate = (2S)-2-isopropylmalate. The protein operates within amino-acid biosynthesis; L-leucine biosynthesis; L-leucine from 3-methyl-2-oxobutanoate: step 2/4. Catalyzes the isomerization between 2-isopropylmalate and 3-isopropylmalate, via the formation of 2-isopropylmaleate. This Streptococcus thermophilus (strain ATCC BAA-491 / LMD-9) protein is 3-isopropylmalate dehydratase large subunit.